A 394-amino-acid chain; its full sequence is Ceramide glucosyltransferase (394 aa).

Topologically, residues 1 to 10 (MALLDLAQEG) are lumenal. A helical membrane pass occupies residues 11–32 (MALFGFVLFVVLWLMHFMSIIY). Over 33-195 (TRLHLNKKAT…QVYFGTSHPR (163 aa)) the chain is Cytoplasmic. D92 is a short sequence motif (D1). The residue at position 117 (K117) is an N6-acetyllysine. D144 is a short sequence motif (D2). Residues 196–215 (SYISANVTGFKCVTGMSCLM) traverse the membrane as a helical segment. Over 216 to 287 (RKDVLDQAGG…KLRINMLPAT (72 aa)) the chain is Lumenal. Position 236 (D236) is a short sequence motif, D3. D236 acts as the Proton acceptor in catalysis. The short motif at 272–276 (RMIRW) is the (Q/R)XXRW element. The chain crosses the membrane as a helical span at residues 288-304 (IICEPISECFVASLIIG). The Cytoplasmic portion of the chain corresponds to 305 to 309 (WAAHH). The chain crosses the membrane as a helical span at residues 310–328 (VFRWDIMVFFMCHCLAWFI). Over 329-348 (FDYIQLRGVQGGTLCFSKLD) the chain is Lumenal. A helical membrane pass occupies residues 349–369 (YAVAWFIRESMTIYIFLSALW). Topologically, residues 370-394 (DPTISWRTGRYRLRCGGTAEEILDV) are cytoplasmic.

This sequence belongs to the glycosyltransferase 2 family. In terms of assembly, interacts with RTN1; regulates the ceramide glucosyltransferase activity of UGCG.

The protein localises to the golgi apparatus membrane. The enzyme catalyses an N-acylsphing-4-enine + UDP-alpha-D-glucose = a beta-D-glucosyl-(1&lt;-&gt;1')-N-acylsphing-4-enine + UDP + H(+). It carries out the reaction UDP-alpha-D-xylose + an N-acylsphing-4-enine = a beta-D-xylosyl-(1&lt;-&gt;1')-N-acylsphing-4-enine + UDP + H(+). It catalyses the reaction N-(9Z-octadecenoyl)-sphing-4-enine + UDP-alpha-D-xylose = beta-D-xylosyl-(1&lt;-&gt;1')-N-(9Z-octadecenoyl)-sphing-4-enine + UDP + H(+). Its pathway is lipid metabolism; sphingolipid metabolism. Functionally, participates in the initial step of the glucosylceramide-based glycosphingolipid/GSL synthetic pathway at the cytosolic surface of the Golgi. Catalyzes the transfer of glucose from UDP-glucose to ceramide to produce glucosylceramide/GlcCer (such as beta-D-glucosyl-(1&lt;-&gt;1')-N-acylsphing-4-enine). Glucosylceramide is the core component of glycosphingolipids/GSLs, amphipathic molecules consisting of a ceramide lipid moiety embedded in the outer leaflet of the membrane, linked to one of hundreds of different externally oriented oligosaccharide structures. Glycosphingolipids are essential components of membrane microdomains that mediate membrane trafficking and signal transduction. They are implicated in many fundamental cellular processes, including growth, differentiation, migration, morphogenesis, cell-to-cell and cell-to-matrix interactions. They are required for instance in the proper development and functioning of the nervous system. As an example of their role in signal transduction, they regulate the leptin receptor/LEPR in the leptin-mediated signaling pathway. They also play an important role in the establishment of the skin barrier regulating keratinocyte differentiation and the proper assembly of the cornified envelope. The biosynthesis of GSLs is also required for the proper intestinal endocytic uptake of nutritional lipids. Catalyzes the synthesis of xylosylceramide/XylCer (such as beta-D-xylosyl-(1&lt;-&gt;1')-N-acylsphing-4-enine) using UDP-Xyl as xylose donor. This Mus musculus (Mouse) protein is Ceramide glucosyltransferase.